The following is a 280-amino-acid chain: Keratin, type I cytoskeletal 47 kDa (280 aa).

Positions 1-81 (MSFRSSSSYS…SSSFSSFGGN (81 aa)) are head. The tract at residues 82 to 117 (DKQTMQNLNDRLASYLEKVRALEAANADLELKIREW) is coil 1A. The region spanning 82–280 (DKQTMQNLND…RDAELWFNQK (199 aa)) is the IF rod domain. A linker 1 region spans residues 118-139 (YEKQKGSGIGAASKDFSKYFEI). A coil 1B region spans residues 140-231 (ISDLRNKILF…KNHEEEMSIA (92 aa)). The tract at residues 232–254 (KGSAAGQVTVEMDAAPGVDLNKI) is linker 12. A coil 2 region spans residues 255–280 (LSDMRADYETLAEKNRRDAELWFNQK).

The protein belongs to the intermediate filament family. In terms of assembly, heterotetramer of two type I and two type II keratins.

This is Keratin, type I cytoskeletal 47 kDa (xk81b1) from Xenopus laevis (African clawed frog).